We begin with the raw amino-acid sequence, 394 residues long: MKIAIAGSGYVGLSLAVLLAQHHEVKVIDVIKDKVESINNRKSPIKDEAIEKYLVEKELNLEASLDPAHVYKDVEYAIIATPTNYDVDLNQFDTSSVEAAIKTCMEYNDTCTIVIKSTIPEGYTKEVREKFNTDRIIFSPEFLRESKALYDNLYPSRIVVGTDLDDSELTKRAWQFADLLKGGAIKEEVPILVVAFNEAEVAKLFSNTYLATRVRYFNEIDTYSEVKGLNPKTIIDIVCYDPRIGSYYNNPSFGYGGYCLPKDTKQLKASFRDVPENLITAVVQSNKTRKDYIAGAILAKQPSVVGIYRLIMKSDSDNFRSSAVKGVMERLDNYGKEIVIYEPTIECDTFMGYRVIKSLDEFKNISDIVVANRMNDDLRDIQEKLYTRDLFGRE.

Residues 2-19 (KIAI…AVLL), Val11, Asp29, Lys34, Thr83, Thr118, and Glu145 contribute to the NAD(+) site. Substrate contacts are provided by residues 141–145 (EFLRE), Lys203, Asn207, 248–252 (YNNPS), and Gly256. Position 258 (Tyr258) interacts with NAD(+). Catalysis depends on Cys259, which acts as the Nucleophile. Position 262 (Lys262) interacts with NAD(+). Lys313 is a substrate binding site. Arg320 contributes to the NAD(+) binding site.

This sequence belongs to the UDP-glucose/GDP-mannose dehydrogenase family.

The catalysed reaction is UDP-alpha-D-glucose + 2 NAD(+) + H2O = UDP-alpha-D-glucuronate + 2 NADH + 3 H(+). The protein operates within nucleotide-sugar biosynthesis; UDP-alpha-D-glucuronate biosynthesis; UDP-alpha-D-glucuronate from UDP-alpha-D-glucose: step 1/1. Functionally, catalyzes the formation of UDP-glucuronic acid which is required for capsular hyaluronic acid synthesis. Directly responsible for the transformation of some unencapsulated serotype-3 SP mutants to the encapsulated phenotype. The sequence is that of UDP-glucose 6-dehydrogenase (cap3A) from Streptococcus pneumoniae.